A 77-amino-acid chain; its full sequence is Conotoxin VnMEKL-023 (77 aa).

A signal peptide spans 1–19 (MQKLTILLLVAAVLMSTQA). The propeptide occupies 20 to 37 (LIKGGGEKRPKEKIRFLS). Intrachain disulfides connect Cys51/Cys65, Cys58/Cys69, and Cys64/Cys74.

The protein belongs to the conotoxin O2 superfamily. As to expression, expressed by the venom duct.

Its subcellular location is the secreted. This is Conotoxin VnMEKL-023 from Conus ventricosus (Mediterranean cone).